Consider the following 287-residue polypeptide: NAD-dependent protein deacylase sir-2.2 (287 aa).

A Deacetylase sirtuin-type domain is found at 10 to 287; it reads AELCENSLKK…YKISDVLKEM (278 aa). NAD(+)-binding positions include 35–55 and 116–119; these read GAGI…VGLY and QNVD. Catalysis depends on His-134, which acts as the Proton acceptor. Positions 142, 145, 196, and 199 each coordinate Zn(2+). NAD(+)-binding positions include 236-238, 262-264, and Ile-280; these read GTS and NIG.

This sequence belongs to the sirtuin family. Class II subfamily. In terms of assembly, interacts with pyc-1, pcca-1 and mccc-1. Zn(2+) serves as cofactor. In terms of tissue distribution, ubiquitously expressed with high expression in the pharynx, body wall muscles and gonad.

It is found in the mitochondrion matrix. Its subcellular location is the mitochondrion. The catalysed reaction is N(6)-acetyl-L-lysyl-[protein] + NAD(+) + H2O = 2''-O-acetyl-ADP-D-ribose + nicotinamide + L-lysyl-[protein]. Functionally, NAD-dependent protein deacylase. Catalyzes the NAD-dependent hydrolysis of acyl groups from lysine residues. Plays a role in oxidative stress resistance. The chain is NAD-dependent protein deacylase sir-2.2 (sir-2.2) from Caenorhabditis elegans.